A 78-amino-acid polypeptide reads, in one-letter code: Protein SlyX homolog (78 aa).

This sequence belongs to the SlyX family.

The protein is Protein SlyX homolog of Xanthomonas axonopodis pv. citri (strain 306).